We begin with the raw amino-acid sequence, 76 residues long: uncharacterized protein (76 aa).

The disordered stretch occupies residues Ser-27–Leu-76.

This is an uncharacterized protein from Caenorhabditis elegans.